The primary structure comprises 192 residues: UPF0149 protein KPK_0755 (192 aa).

This sequence belongs to the UPF0149 family.

The chain is UPF0149 protein KPK_0755 from Klebsiella pneumoniae (strain 342).